The sequence spans 249 residues: dTDP-4-amino-2,3,4,6-tetradeoxy-D-glucose N,N-dimethyltransferase (249 aa).

R30 contributes to the substrate binding site. Residues A59, E80, and 102-103 each bind S-adenosyl-L-methionine; that span reads DI. Substrate-binding positions include T165, 178–182, and R241; that span reads RLSHS.

The protein belongs to the methyltransferase TylM1/DesVI family. As to quaternary structure, homodimer. Mg(2+) is required as a cofactor.

The catalysed reaction is dTDP-4-amino-2,3,4,6-tetradeoxy-alpha-D-erythro-hexopyranose + 2 S-adenosyl-L-methionine = dTDP-alpha-D-forosamine + 2 S-adenosyl-L-homocysteine + 2 H(+). In terms of biological role, involved in the biosynthesis of forosamine ((4-dimethylamino)-2,3,4,6-tetradeoxy-alpha-D-threo-hexopyranose), a highly deoxygenated sugar component of several bioactive natural products such as the insecticidal spinosyns A and D. Catalyzes the dimethylation of the C-4 amino group from dTDP-4-amino-2,3,4,6-tetradeoxy-alpha-D-glucose to yield dTDP-D-forosamine. The polypeptide is dTDP-4-amino-2,3,4,6-tetradeoxy-D-glucose N,N-dimethyltransferase (Saccharopolyspora spinosa).